A 547-amino-acid polypeptide reads, in one-letter code: Rho GTPase-activating protein 36 (547 aa).

The N-terminal stretch at 1–40 is a signal peptide; that stretch reads MGGCNPFLKAARTLCPRIMPPLLFLSAFIFLVNVLGGAPG. Residues 226–426 form the Rho-GAP domain; it reads MSLNPIAKQI…AMIDNWDILF (201 aa). The disordered stretch occupies residues 493 to 547; that stretch reads FDEGSSEEPAVPPGTAHSHDDEEGAGNPPIPEQDRPLLRVPREKQAKTGIGYFFP. The segment covering 524 to 538 has biased composition (basic and acidic residues); sequence EQDRPLLRVPREKQA.

In terms of biological role, GTPase activator for the Rho-type GTPases by converting them to an inactive GDP-bound state. The chain is Rho GTPase-activating protein 36 (ARHGAP36) from Ailuropoda melanoleuca (Giant panda).